The chain runs to 173 residues: Glutamyl-tRNA(Gln) amidotransferase subunit C, mitochondrial (173 aa).

Belongs to the GatC family. Subunit of the heterotrimeric GatCAB amidotransferase (AdT) complex, composed of A, B and C subunits.

Its subcellular location is the mitochondrion. It carries out the reaction L-glutamyl-tRNA(Gln) + L-glutamine + ATP + H2O = L-glutaminyl-tRNA(Gln) + L-glutamate + ADP + phosphate + H(+). Functionally, allows the formation of correctly charged Gln-tRNA(Gln) through the transamidation of misacylated Glu-tRNA(Gln) in the mitochondria. The reaction takes place in the presence of glutamine and ATP through an activated gamma-phospho-Glu-tRNA(Gln). The chain is Glutamyl-tRNA(Gln) amidotransferase subunit C, mitochondrial from Drosophila persimilis (Fruit fly).